Consider the following 453-residue polypeptide: UDP-N-acetylmuramoylalanine--D-glutamate ligase (453 aa).

Position 117 to 123 (117 to 123 (GANGKST)) interacts with ATP.

It belongs to the MurCDEF family.

It localises to the cytoplasm. The enzyme catalyses UDP-N-acetyl-alpha-D-muramoyl-L-alanine + D-glutamate + ATP = UDP-N-acetyl-alpha-D-muramoyl-L-alanyl-D-glutamate + ADP + phosphate + H(+). Its pathway is cell wall biogenesis; peptidoglycan biosynthesis. Cell wall formation. Catalyzes the addition of glutamate to the nucleotide precursor UDP-N-acetylmuramoyl-L-alanine (UMA). The chain is UDP-N-acetylmuramoylalanine--D-glutamate ligase from Methylobacillus flagellatus (strain ATCC 51484 / DSM 6875 / VKM B-1610 / KT).